Here is a 180-residue protein sequence, read N- to C-terminus: Large ribosomal subunit protein uL5 (180 aa).

Belongs to the universal ribosomal protein uL5 family. Part of the 50S ribosomal subunit; part of the 5S rRNA/L5/L18/L25 subcomplex. Contacts the 5S rRNA and the P site tRNA. Forms a bridge to the 30S subunit in the 70S ribosome.

This is one of the proteins that bind and probably mediate the attachment of the 5S RNA into the large ribosomal subunit, where it forms part of the central protuberance. In the 70S ribosome it contacts protein S13 of the 30S subunit (bridge B1b), connecting the 2 subunits; this bridge is implicated in subunit movement. Contacts the P site tRNA; the 5S rRNA and some of its associated proteins might help stabilize positioning of ribosome-bound tRNAs. This Xanthomonas oryzae pv. oryzae (strain MAFF 311018) protein is Large ribosomal subunit protein uL5.